A 209-amino-acid chain; its full sequence is MKKAIIGRKVGMTQIFDEKGKVIPVTVVEAGPCVVVQKKTLENDGYEAIQVGFDEIREKLANKPRKGHFAKAGATLRRTLKEFRLDDISQYEVGNEIKADVFGAGDKVDVSAVSKGKGFQGSIKRWNQQRGPMTHGSKFHRAPGSMGASSDPSRTFKNKRMPGHMGSVNTTVLNLEVVKVIAEKNLILIKGGIPGPNKGTVVIKDTVRA.

A disordered region spans residues 128–154 (QQRGPMTHGSKFHRAPGSMGASSDPSR).

The protein belongs to the universal ribosomal protein uL3 family. Part of the 50S ribosomal subunit. Forms a cluster with proteins L14 and L19.

One of the primary rRNA binding proteins, it binds directly near the 3'-end of the 23S rRNA, where it nucleates assembly of the 50S subunit. In Clostridium beijerinckii (strain ATCC 51743 / NCIMB 8052) (Clostridium acetobutylicum), this protein is Large ribosomal subunit protein uL3.